Consider the following 455-residue polypeptide: Probable cytosolic iron-sulfur protein assembly protein 1 (455 aa).

WD repeat units follow at residues 31-70, 90-129, 163-202, 208-247, 253-292, 318-365, and 380-453; these read GHSS…TTSA, GHQR…DGSS, GHES…EFEC, EHSQ…DWFC, GHES…QCEA, YHDR…DEKS, and HASA…YAAT.

This sequence belongs to the WD repeat CIA1 family.

Its function is as follows. Essential component of the cytosolic iron-sulfur (Fe/S) protein assembly machinery. Required for the maturation of extramitochondrial Fe/S proteins. The polypeptide is Probable cytosolic iron-sulfur protein assembly protein 1 (Mycosarcoma maydis (Corn smut fungus)).